The chain runs to 400 residues: Methylthioribose kinase (400 aa).

Residues Asn-40, Lys-57, and 111–113 (EDL) contribute to the ATP site. Residue Asp-229 participates in substrate binding. ATP is bound at residue 246–248 (DAE). Arg-344 serves as a coordination point for substrate.

This sequence belongs to the methylthioribose kinase family. As to quaternary structure, homodimer.

It carries out the reaction 5-(methylsulfanyl)-D-ribose + ATP = 5-(methylsulfanyl)-alpha-D-ribose 1-phosphate + ADP + H(+). It functions in the pathway amino-acid biosynthesis; L-methionine biosynthesis via salvage pathway; S-methyl-5-thio-alpha-D-ribose 1-phosphate from S-methyl-5'-thioadenosine (hydrolase route): step 2/2. Its function is as follows. Catalyzes the phosphorylation of methylthioribose into methylthioribose-1-phosphate. The protein is Methylthioribose kinase of Pectobacterium carotovorum subsp. carotovorum (strain PC1).